The following is a 275-amino-acid chain: Probable 2' cyclic ADP-D-ribose synthase TcpB (275 aa).

Over residues 17–32 (RLKADDSREMSKEKQA) the composition is skewed to basic and acidic residues. The disordered stretch occupies residues 17 to 66 (RLKADDSREMSKEKQAQSKAHKAQQAISSAKSLSTQKSKMSELERATRDG). Over residues 39–48 (AQQAISSAKS) the composition is skewed to low complexity. Over residues 55–64 (KMSELERATR) the composition is skewed to basic and acidic residues. The TIR domain occupies 142–275 (EEYDFFISHA…EIAKELHSLI (134 aa)). NAD(+)-binding positions include 151 to 152 (AS) and K181. E217 is an active-site residue.

As to quaternary structure, homodimer. Interacts with host TIRAP, and probably host MYD88. Interacts with host TLR4, abolishes the interaction of host TIRAP with TLR4.

The protein localises to the secreted. It localises to the host cell membrane. It catalyses the reaction NAD(+) + H2O = ADP-D-ribose + nicotinamide + H(+). It carries out the reaction NAD(+) = 2'cADPR + nicotinamide + H(+). Its function is as follows. Virulence factor that interferes with host Toll-like receptor 2 (TLR2) and TLR4 signaling, resulting in the reduction of dendritic cell maturation, inhibition of pro-inflammatory cytokine secretion and impaired NF-kappa-B activation in macrophages. Binds host lipids. Has NAD(+) hydrolase (NADase) activity, catalyzes cleavage of NAD(+) into ADP-D-ribose (ADPR) and nicotinamide, also generates a cyclization variant of cyclic ADPR (cADPR), termed v-cADPR (probably 2'cADPR). The protein is Probable 2' cyclic ADP-D-ribose synthase TcpB (tcpB) of Brucella melitensis biotype 2 (strain ATCC 23457).